The sequence spans 385 residues: Pepsin A (385 aa).

The signal sequence occupies residues 1–15 (MKWLLLLSLVVLSEC). The propeptide at 16 to 59 (LVKVPLVRKKSLRQNLIKNGKLKDFLKTHKHNPASKYFPEAAAL) is activation peptide. The 310-residue stretch at 73–382 (YFGTIGIGTP…DRANNKVGLA (310 aa)) folds into the Peptidase A1 domain. The active site involves Asp91. Residues Cys104 and Cys109 are joined by a disulfide bond. The residue at position 127 (Ser127) is a Phosphoserine. An intrachain disulfide couples Cys265 to Cys269. Asp274 is a catalytic residue. A disulfide bond links Cys308 and Cys341.

This sequence belongs to the peptidase A1 family. In terms of processing, minor amounts of the active enzyme occur with 'Ala-58' at the amino end.

Its subcellular location is the secreted. The catalysed reaction is Preferential cleavage: hydrophobic, preferably aromatic, residues in P1 and P1' positions. Cleaves 1-Phe-|-Val-2, 4-Gln-|-His-5, 13-Glu-|-Ala-14, 14-Ala-|-Leu-15, 15-Leu-|-Tyr-16, 16-Tyr-|-Leu-17, 23-Gly-|-Phe-24, 24-Phe-|-Phe-25 and 25-Phe-|-Tyr-26 bonds in the B chain of insulin.. Its function is as follows. Shows particularly broad specificity; although bonds involving phenylalanine and leucine are preferred, many others are also cleaved to some extent. The sequence is that of Pepsin A (PGA) from Sus scrofa (Pig).